The sequence spans 323 residues: Voltage-dependent calcium channel gamma-2 subunit (323 aa).

Residues 10 to 30 (MLLTTVGAFAAFSLMTIAVGT) form a helical membrane-spanning segment. A glycan (N-linked (GlcNAc...) asparagine) is linked at N48. Helical transmembrane passes span 104–124 (SSIFPILSVILLFMGGLCIAA), 134–154 (IILSAGIFFVSAGLSNIIGII), and 182–202 (FGALSFIIAEMVGVLAVHMFI). Residues 233-261 (YQRRSRSSSRSTEPSHSRDASPVGVKGFN) form a disordered region. Phosphoserine is present on S253. Y271 is modified (phosphotyrosine). At T321 the chain carries Phosphothreonine; by PKA.

Belongs to the PMP-22/EMP/MP20 family. CACNG subfamily. As to quaternary structure, the L-type calcium channel is composed of five subunits: alpha-1, alpha-2/delta, beta and gamma. Interacts with the PDZ domains of DLG4/PSD-95 and DLG1/SAP97. May interact with GOPC. Acts as an auxiliary subunit for AMPA-selective glutamate receptors (AMPARs). Found in a complex with GRIA1, GRIA2, GRIA3, GRIA4, CNIH2, CNIH3, CACNG3, CACNG4, CACNG5, CACNG7 and CACNG8. Interacts with GRIA1 and GRIA2. Interacts with MPP2. Phosphorylation of Thr-321 by PKA impairs interaction with DLG1 and DLG4. In terms of tissue distribution, brain.

Its subcellular location is the membrane. It is found in the synapse. It localises to the synaptosome. In terms of biological role, regulates the trafficking and gating properties of AMPA-selective glutamate receptors (AMPARs). Promotes their targeting to the cell membrane and synapses and modulates their gating properties by slowing their rates of activation, deactivation and desensitization. Does not show subunit-specific AMPA receptor regulation and regulates all AMPAR subunits. Thought to stabilize the calcium channel in an inactivated (closed) state. The sequence is that of Voltage-dependent calcium channel gamma-2 subunit (Cacng2) from Mus musculus (Mouse).